Consider the following 69-residue polypeptide: MARFRPSRSRSRSLYRRRRRSRRQRSRRGGRQTGPRKITRRGRGRGKSRRRRGRRSMRSSRRRRRRRRN.

2 stretches are compositionally biased toward basic residues: residues 1-30 and 37-69; these read MARFRPSRSRSRSLYRRRRRSRRQRSRRGG and KITRRGRGRGKSRRRRGRRSMRSSRRRRRRRRN. The tract at residues 1-69 is disordered; the sequence is MARFRPSRSR…SRRRRRRRRN (69 aa).

Belongs to the protamine P1 family. Testis.

It localises to the nucleus. It is found in the chromosome. Its function is as follows. Protamines substitute for histones in the chromatin of sperm during the haploid phase of spermatogenesis. They compact sperm DNA into a highly condensed, stable and inactive complex. This is Sperm protamine P1 (PRM1) from Tachyglossus aculeatus aculeatus (Southeast Australian short-beaked echidna).